Consider the following 195-residue polypeptide: Rubrerythrin (195 aa).

In terms of domain architecture, Ferritin-like diiron spans Met1 to Lys150. Residues Glu20, Glu53, Glu98, Glu101, Glu132, His135, Cys162, Cys165, Cys178, and Cys181 each contribute to the Fe(3+) site. The Rubredoxin-like domain maps to Val157–Tyr195.

As to quaternary structure, homodimer. Possesses two rubredoxin-like centers and two non-sulfur oxo-bridged di-iron centers per dimer. The cofactor is Fe(3+).

It is found in the cytoplasm. Functionally, may provide oxidative stress protection via catalytic reduction of intracellular hydrogen peroxide. The polypeptide is Rubrerythrin (rbr) (Clostridium perfringens (strain 13 / Type A)).